We begin with the raw amino-acid sequence, 355 residues long: N-acylethanolamine-hydrolyzing acid amidase (355 aa).

The first 17 residues, 1-17, serve as a signal peptide directing secretion; that stretch reads MLLLQIILLLLPVICSA. Cysteine 122 functions as the Nucleophile in the catalytic mechanism. Asparagine 150, asparagine 160, and asparagine 328 each carry an N-linked (GlcNAc...) asparagine glycan.

The protein belongs to the acid ceramidase family. As to quaternary structure, heterodimer of an alpha and a beta subunit, produced by autocatalytic cleavage. In terms of processing, N-glycosylated. Autoproteolytic cleavage at pH 4.5 gives rise to the alpha and beta subunit. Cleavage gives rise to a conformation change that activates the enzyme. The same catalytic Cys residue mediates the autoproteolytic cleavage and subsequent hydrolysis of lipid substrates.

The protein resides in the lysosome. It is found in the membrane. It carries out the reaction N-hexadecanoylethanolamine + H2O = ethanolamine + hexadecanoate. The catalysed reaction is an N-(long-chain fatty acyl)ethanolamine + H2O = a long-chain fatty acid + ethanolamine. It functions in the pathway lipid metabolism; fatty acid metabolism. Functionally, degrades bioactive fatty acid amides, such as N-palmitoylethanolamine, to ethanolamine and free fatty acids. This is N-acylethanolamine-hydrolyzing acid amidase from Caenorhabditis elegans.